The primary structure comprises 969 residues: Leucine--tRNA ligase (969 aa).

The 'HIGH' region signature appears at 78-89 (PYPSGEGLHVGH). A 'KMSKS' region motif is present at residues 739-743 (KIGKS). Position 742 (lysine 742) interacts with ATP.

It belongs to the class-I aminoacyl-tRNA synthetase family.

The protein localises to the cytoplasm. It carries out the reaction tRNA(Leu) + L-leucine + ATP = L-leucyl-tRNA(Leu) + AMP + diphosphate. This chain is Leucine--tRNA ligase, found in Mycobacterium tuberculosis (strain ATCC 25177 / H37Ra).